The sequence spans 160 residues: Large ribosomal subunit protein uL22c (160 aa).

This sequence belongs to the universal ribosomal protein uL22 family. Part of the 50S ribosomal subunit.

It localises to the plastid. It is found in the chloroplast. Functionally, this protein binds specifically to 23S rRNA. Its function is as follows. The globular domain of the protein is located near the polypeptide exit tunnel on the outside of the subunit, while an extended beta-hairpin is found that lines the wall of the exit tunnel in the center of the 70S ribosome. The polypeptide is Large ribosomal subunit protein uL22c (rpl22) (Aethionema grandiflorum (Persian stone-cress)).